The primary structure comprises 210 residues: MIKQPALAQEQYACVYAWLALLFFREVDDEGLIQLQSAEIADWLALLKRQPALAASVALLEQKIAALSLRQDAQLELAADFCGLFLMTDKKSALPYASQYPQQEPGMIKHLLLEAGMEVNDDFKEPTDHLAIYLELLSHLHFSLGESFQQRRMNKLRQKTLSSLLEWLPEFTNNCLKHDPYGFYAALSQLLLAIVRFDDGKEDLSIVAAE.

The protein belongs to the TorD/DmsD family. TorD subfamily.

It localises to the cytoplasm. Functionally, involved in the biogenesis of TorA. Acts on TorA before the insertion of the molybdenum cofactor and, as a result, probably favors a conformation of the apoenzyme that is competent for acquiring the cofactor. In Salmonella newport (strain SL254), this protein is Chaperone protein TorD.